We begin with the raw amino-acid sequence, 542 residues long: Chromatin structure-remodeling complex subunit rsc4 (542 aa).

The 111-residue stretch at 6–116 (HNAPFDKTKF…NTANSLESKD (111 aa)) folds into the Bromo 1 domain. Disordered regions lie at residues 114 to 139 (SKDGTLNEEENEEMESSINEEHKPGT) and 246 to 327 (ISSF…PIPE). Over residues 119–128 (LNEEENEEME) the composition is skewed to acidic residues. Residues 139–249 (TNEIDVPKVI…QLSSSLISSF (111 aa)) form the Bromo 2 domain. The span at 252 to 266 (QPKEHSPATSKHEPE) shows a compositional bias: basic and acidic residues. Ser257, Ser271, Ser287, and Ser313 each carry phosphoserine. The segment covering 268–280 (TPASPTPSVSAST) has biased composition (low complexity). The span at 286–298 (TSVAPSFITSDQA) shows a compositional bias: polar residues. A compositionally biased stretch (basic and acidic residues) spans 304-322 (LKSEEAHVESFSKESEKDQ).

As to quaternary structure, component of the RSC complex composed of at least arp9, arp42, rsc1, rsc4, rsc7, rsc9, rsc58, sfh1, snf21, ssr1, ssr2, ssr3 and ssr4. The complex interacts with histone and histone variant components of centromeric chromatin.

It localises to the nucleus. Functionally, component of the chromatin structure remodeling complex (RSC), which is involved in transcription regulation and nucleosome positioning. Controls particularly membrane and organelle development genes. This chain is Chromatin structure-remodeling complex subunit rsc4 (rsc4), found in Schizosaccharomyces pombe (strain 972 / ATCC 24843) (Fission yeast).